Here is a 268-residue protein sequence, read N- to C-terminus: MHHTNKKKYGQNFLTDVNLLNKIVTKASITDKNVLEIGPGKGALTKIIVPQAKNVLAYEIDATLKPFLNFENHNNVNIIYDDFLKRDLLKDFDHYFSPNSQLSLIGNLPYYITSPILFKIIDTPQINDATIMIQKEVGMRLLAQPNNKNYNALSVIIQFLFSIEKIQEVKRHMFFPTPKVDSIVIKLTKNNNILPTFLKQFIKFVKNSFKQKRKTLLNNLSCQFLLSKETIIPFFLQHHIPLQIRAEQVTLETFQKLTVKWFIFLNMS.

Asn12, Leu14, Gly38, Glu59, Asp82, and Asn107 together coordinate S-adenosyl-L-methionine.

It belongs to the class I-like SAM-binding methyltransferase superfamily. rRNA adenine N(6)-methyltransferase family. RsmA subfamily.

It is found in the cytoplasm. The catalysed reaction is adenosine(1518)/adenosine(1519) in 16S rRNA + 4 S-adenosyl-L-methionine = N(6)-dimethyladenosine(1518)/N(6)-dimethyladenosine(1519) in 16S rRNA + 4 S-adenosyl-L-homocysteine + 4 H(+). In terms of biological role, specifically dimethylates two adjacent adenosines (A1518 and A1519) in the loop of a conserved hairpin near the 3'-end of 16S rRNA in the 30S particle. May play a critical role in biogenesis of 30S subunits. The protein is Ribosomal RNA small subunit methyltransferase A of Aster yellows witches'-broom phytoplasma (strain AYWB).